Reading from the N-terminus, the 188-residue chain is Elongation factor P-like protein (188 aa).

This sequence belongs to the elongation factor P family.

In Xanthomonas oryzae pv. oryzae (strain MAFF 311018), this protein is Elongation factor P-like protein.